The primary structure comprises 317 residues: tRNA uridine(34) hydroxylase (317 aa).

The Rhodanese domain occupies 123-217 (EDDDTIVIDA…YGKDPETKGE (95 aa)). Cysteine 177 (cysteine persulfide intermediate) is an active-site residue.

It belongs to the TrhO family.

It catalyses the reaction uridine(34) in tRNA + AH2 + O2 = 5-hydroxyuridine(34) in tRNA + A + H2O. Functionally, catalyzes oxygen-dependent 5-hydroxyuridine (ho5U) modification at position 34 in tRNAs. The sequence is that of tRNA uridine(34) hydroxylase from Staphylococcus carnosus (strain TM300).